A 381-amino-acid chain; its full sequence is E3 ubiquitin-protein ligase RNF13 (381 aa).

A signal peptide spans 1–34; the sequence is MLLSIGMLMLSATQVYTILTVQLFAFLNLLPVEA. Residues 35 to 182 lie on the Lumenal side of the membrane; the sequence is DILAYNFENA…VPELSLPLEY (148 aa). The PA domain occupies 64–160; that stretch reads LKGFLINSKP…GESSANSLKD (97 aa). Asparagine 88 carries N-linked (GlcNAc...) asparagine glycosylation. A helical transmembrane segment spans residues 183-203; that stretch reads YLIPFLIIVGICLILIVIFMI. Residues 204 to 381 lie on the Cytoplasmic side of the membrane; that stretch reads TKFVQDRHRN…EQDYNIANTV (178 aa). The RING-type; atypical zinc-finger motif lies at 240-282; it reads CAICLEEYEDGDKLRILPCSHAYHCKCVDPWLTKTKKTCPVCK. Residues 285–381 form a disordered region; the sequence is VVPSQGDSDS…EQDYNIANTV (97 aa). Residues 317–328 show a composition bias toward polar residues; it reads SARTQSFGSLSE. Over residues 339–357 the composition is skewed to acidic residues; it reads SDYEDDDNEETDSSDADNE. Polar residues predominate over residues 365 to 381; it reads VQLQPNGEQDYNIANTV.

In terms of assembly, interacts with ERN1. Autoubiquitinated. Post-translationally, N-glycosylated and also modified with chondroitin sulfate. Expressed in the brain, heart, kidney, liver and spleen. Higher expression in adult tissues compared to the embryonic counterparts.

It is found in the endoplasmic reticulum membrane. Its subcellular location is the late endosome membrane. It localises to the lysosome membrane. The protein localises to the nucleus inner membrane. The enzyme catalyses S-ubiquitinyl-[E2 ubiquitin-conjugating enzyme]-L-cysteine + [acceptor protein]-L-lysine = [E2 ubiquitin-conjugating enzyme]-L-cysteine + N(6)-ubiquitinyl-[acceptor protein]-L-lysine.. The protein operates within protein modification; protein ubiquitination. Its function is as follows. E3 ubiquitin-protein ligase that regulates cell proliferation. Involved in apoptosis regulation. Mediates ER stress-induced activation of JNK signaling pathway and apoptosis by promoting ERN1 activation and splicing of XBP1 mRNA. Also involved in protein trafficking and localization. This is E3 ubiquitin-protein ligase RNF13 (Rnf13) from Mus musculus (Mouse).